We begin with the raw amino-acid sequence, 264 residues long: Acyl-[acyl-carrier-protein]--UDP-N-acetylglucosamine O-acyltransferase (264 aa).

The protein belongs to the transferase hexapeptide repeat family. LpxA subfamily. As to quaternary structure, homotrimer.

It is found in the cytoplasm. The enzyme catalyses a (3R)-hydroxyacyl-[ACP] + UDP-N-acetyl-alpha-D-glucosamine = a UDP-3-O-[(3R)-3-hydroxyacyl]-N-acetyl-alpha-D-glucosamine + holo-[ACP]. Its pathway is glycolipid biosynthesis; lipid IV(A) biosynthesis; lipid IV(A) from (3R)-3-hydroxytetradecanoyl-[acyl-carrier-protein] and UDP-N-acetyl-alpha-D-glucosamine: step 1/6. In terms of biological role, involved in the biosynthesis of lipid A, a phosphorylated glycolipid that anchors the lipopolysaccharide to the outer membrane of the cell. The protein is Acyl-[acyl-carrier-protein]--UDP-N-acetylglucosamine O-acyltransferase of Chlorobaculum parvum (strain DSM 263 / NCIMB 8327) (Chlorobium vibrioforme subsp. thiosulfatophilum).